The primary structure comprises 262 residues: Nodulation protein J (262 aa).

The ABC transmembrane type-2 domain maps to 33-259; the sequence is ASILGNLADP…FLSTALLRRR (227 aa). 7 consecutive transmembrane segments (helical) span residues 35 to 55, 62 to 82, 102 to 122, 127 to 147, 148 to 168, 177 to 197, and 231 to 251; these read ILGN…GLGM, GVSY…MTAS, AILH…AWAA, LAGT…WVSL, LYAL…AMIV, YFIF…GAVF, and LVHV…PFFL.

Belongs to the ABC-2 integral membrane protein family. Lipooligosaccharide exporter (TC 3.A.1.102) subfamily. In terms of assembly, the complex is composed of two ATP-binding proteins (NodI) and two transmembrane proteins (NodJ).

It localises to the cell inner membrane. In terms of biological role, part of the ABC transporter complex NodIJ involved in the export of the nodulation factors (Nod factors), the bacterial signal molecules that induce symbiosis and subsequent nodulation induction. Nod factors are LCO (lipo-chitin oligosaccharide), a modified beta-1,4-linked N-acetylglucosamine oligosaccharide. This subunit encodes the transporter. This chain is Nodulation protein J (nodJ), found in Rhizobium meliloti (strain 1021) (Ensifer meliloti).